A 149-amino-acid polypeptide reads, in one-letter code: Large ribosomal subunit protein uL15 (149 aa).

Residues 1–54 (MSLKLHNLKPTPNSRPEKHRKGRGHAAGKGKQAGKGQSGQNKRKGHRLGFEGGQ) are disordered. Residues 17–28 (EKHRKGRGHAAG) show a composition bias toward basic residues.

Belongs to the universal ribosomal protein uL15 family. In terms of assembly, part of the 50S ribosomal subunit.

In terms of biological role, binds to the 23S rRNA. The chain is Large ribosomal subunit protein uL15 from Mycoplasmopsis synoviae (strain 53) (Mycoplasma synoviae).